The primary structure comprises 144 residues: Transcriptional regulator SlyA (144 aa).

In terms of domain architecture, HTH marR-type spans 2–135 (ESPLGSDLAR…LIKLIAKLEH (134 aa)). The H-T-H motif DNA-binding region spans 49-72 (QIQLAKAIGIEQPSLVRTLDQLED).

The protein belongs to the SlyA family. As to quaternary structure, homodimer.

The protein localises to the cytoplasm. Functionally, transcription regulator that can specifically activate or repress expression of target genes. Required for virulence and survival in the macrophage environment. Probably activates the transcription of ssrB. Independently of ssrB activation, capable of stimulating the expression of virulence genes found on pathogenicity island 2 (SPI2). Probably activates expression of ispA, xseB genes, and of omp operon. In Salmonella typhimurium (strain LT2 / SGSC1412 / ATCC 700720), this protein is Transcriptional regulator SlyA.